The primary structure comprises 643 residues: Threonine--tRNA ligase (643 aa).

In terms of domain architecture, TGS spans 1–61; the sequence is MPIITLPDGS…EQDATLEIIT (61 aa). The interval 243–534 is catalytic; sequence DHRKIGKALD…ITEEYAGFFP (292 aa). Zn(2+) is bound by residues Cys334, His385, and His511.

The protein belongs to the class-II aminoacyl-tRNA synthetase family. As to quaternary structure, homodimer. It depends on Zn(2+) as a cofactor.

The protein resides in the cytoplasm. It catalyses the reaction tRNA(Thr) + L-threonine + ATP = L-threonyl-tRNA(Thr) + AMP + diphosphate + H(+). Functionally, catalyzes the attachment of threonine to tRNA(Thr) in a two-step reaction: L-threonine is first activated by ATP to form Thr-AMP and then transferred to the acceptor end of tRNA(Thr). Also edits incorrectly charged L-seryl-tRNA(Thr). This Haemophilus influenzae (strain ATCC 51907 / DSM 11121 / KW20 / Rd) protein is Threonine--tRNA ligase.